The following is a 142-amino-acid chain: UPF0275 protein PM0505 (142 aa).

This sequence belongs to the UPF0275 family.

The polypeptide is UPF0275 protein PM0505 (Pasteurella multocida (strain Pm70)).